The following is a 776-amino-acid chain: DNA ligase (776 aa).

NAD(+) is bound by residues 31–35 (DAEYD), 80–81 (SL), and glutamate 112. Lysine 114 functions as the N6-AMP-lysine intermediate in the catalytic mechanism. NAD(+)-binding residues include arginine 135, glutamate 172, lysine 288, and lysine 312. The Zn(2+) site is built by cysteine 406, cysteine 409, cysteine 436, and cysteine 442. Positions 693-776 (AEGLPLAGQT…TFLAEQGIAV (84 aa)) constitute a BRCT domain.

The protein belongs to the NAD-dependent DNA ligase family. LigA subfamily. It depends on Mg(2+) as a cofactor. Requires Mn(2+) as cofactor.

It catalyses the reaction NAD(+) + (deoxyribonucleotide)n-3'-hydroxyl + 5'-phospho-(deoxyribonucleotide)m = (deoxyribonucleotide)n+m + AMP + beta-nicotinamide D-nucleotide.. Functionally, DNA ligase that catalyzes the formation of phosphodiester linkages between 5'-phosphoryl and 3'-hydroxyl groups in double-stranded DNA using NAD as a coenzyme and as the energy source for the reaction. It is essential for DNA replication and repair of damaged DNA. This Pseudomonas putida (strain ATCC 47054 / DSM 6125 / CFBP 8728 / NCIMB 11950 / KT2440) protein is DNA ligase.